Consider the following 734-residue polypeptide: Regulator of G-protein signaling rgs-6 (734 aa).

The tract at residues 1–24 (MSTPCSGNEPATPTNTSPNNETSN) is disordered. Residues 8-24 (NEPATPTNTSPNNETSN) show a composition bias toward low complexity. In terms of domain architecture, RGS spans 46–157 (IFKKVIRDPV…YDCWPRFLRS (112 aa)). Disordered regions lie at residues 162-236 (QPSF…SPTH), 489-515 (HAVSKSDPNPSAGTSQDRMASGVYSPA), and 538-734 (VNAG…AAYV). Positions 166-176 (TDEELAADDED) are enriched in acidic residues. Residues 180-191 (HSQPTSLNNTNE) show a composition bias toward polar residues. Residues 194–208 (AAAQQSQPAPNAPAA) show a composition bias toward low complexity. 2 stretches are compositionally biased toward polar residues: residues 494 to 506 (SDPNPSAGTSQDR) and 538 to 557 (VNAGSASTSSNNVSEPSKNR). Composition is skewed to basic and acidic residues over residues 563–585 (SKTEKKVVKPESEKEKLKPRSDD) and 606–619 (TTEEPLKRMGKSGD). The segment covering 642 to 694 (AAAAAAGASPSTSAPSTSTSVQTKTTTSPTKSPTSTTITTSGTTTSATSSVAT) has biased composition (low complexity). Composition is skewed to polar residues over residues 705-715 (SASTPATSSQL) and 724-734 (RESSWQTAAYV).

In Caenorhabditis elegans, this protein is Regulator of G-protein signaling rgs-6.